The chain runs to 719 residues: Translation factor guf1, mitochondrial (719 aa).

A mitochondrion-targeting transit peptide spans 1 to 75 (MRGALCRPDV…TRCFSALRSL (75 aa)). The tr-type G domain occupies 119-301 (ERYRNFCIVA…AVISNVPAPV (183 aa)). Residues 128–135 (AHIDHGKS), 194–198 (DTPGH), and 248–251 (NKID) contribute to the GTP site.

It belongs to the TRAFAC class translation factor GTPase superfamily. Classic translation factor GTPase family. LepA subfamily.

It is found in the mitochondrion inner membrane. The catalysed reaction is GTP + H2O = GDP + phosphate + H(+). In terms of biological role, promotes mitochondrial protein synthesis. May act as a fidelity factor of the translation reaction, by catalyzing a one-codon backward translocation of tRNAs on improperly translocated ribosomes. Binds to mitochondrial ribosomes in a GTP-dependent manner. This is Translation factor guf1, mitochondrial (guf1) from Neurospora crassa (strain ATCC 24698 / 74-OR23-1A / CBS 708.71 / DSM 1257 / FGSC 987).